A 185-amino-acid polypeptide reads, in one-letter code: Ribosome-recycling factor (185 aa).

It belongs to the RRF family.

It is found in the cytoplasm. In terms of biological role, responsible for the release of ribosomes from messenger RNA at the termination of protein biosynthesis. May increase the efficiency of translation by recycling ribosomes from one round of translation to another. In Campylobacter hominis (strain ATCC BAA-381 / DSM 21671 / CCUG 45161 / LMG 19568 / NCTC 13146 / CH001A), this protein is Ribosome-recycling factor.